Consider the following 909-residue polypeptide: uncharacterized protein (909 aa).

This is an uncharacterized protein from Sinorhizobium fredii (strain NBRC 101917 / NGR234).